We begin with the raw amino-acid sequence, 88 residues long: Cell division topological specificity factor (88 aa).

It belongs to the MinE family.

Prevents the cell division inhibition by proteins MinC and MinD at internal division sites while permitting inhibition at polar sites. This ensures cell division at the proper site by restricting the formation of a division septum at the midpoint of the long axis of the cell. The chain is Cell division topological specificity factor from Cronobacter sakazakii (strain ATCC BAA-894) (Enterobacter sakazakii).